A 66-amino-acid polypeptide reads, in one-letter code: Potassium channel toxin alpha-KTx 27.3 (66 aa).

An N-terminal signal peptide occupies residues 1 to 17 (MKLMWLLFLCVLAFSIA).

This sequence belongs to the short scorpion toxin superfamily. Potassium channel inhibitor family. Alpha-KTx 27 subfamily. Contains 4 disulfide bonds. As to expression, expressed by the venom gland.

It is found in the secreted. This Lychas mucronatus (Chinese swimming scorpion) protein is Potassium channel toxin alpha-KTx 27.3.